The primary structure comprises 341 residues: Methionine import ATP-binding protein MetN 2 (341 aa).

The ABC transporter domain maps to 2-241 (IELKEVVKEY…PQHAVTKRFV (240 aa)). 38–45 (GFSGAGKS) contacts ATP.

The protein belongs to the ABC transporter superfamily. Methionine importer (TC 3.A.1.24) family. The complex is composed of two ATP-binding proteins (MetN), two transmembrane proteins (MetI) and a solute-binding protein (MetQ).

The protein localises to the cell membrane. The enzyme catalyses L-methionine(out) + ATP + H2O = L-methionine(in) + ADP + phosphate + H(+). It carries out the reaction D-methionine(out) + ATP + H2O = D-methionine(in) + ADP + phosphate + H(+). In terms of biological role, part of the ABC transporter complex MetNIQ involved in methionine import. Responsible for energy coupling to the transport system. The protein is Methionine import ATP-binding protein MetN 2 of Staphylococcus aureus (strain MRSA252).